The chain runs to 515 residues: UDP-glucosyltransferase 2 (515 aa).

A signal peptide spans 1–20; sequence MEFRLLILALFSVLMSTSNG. Residues 21 to 471 are Lumenal-facing; the sequence is AEILALFPIH…TAGAFLHWYQ (451 aa). N-linked (GlcNAc...) asparagine glycans are attached at residues N51, N236, and N303. A helical transmembrane segment spans residues 472–492; that stretch reads YLLLDVITFLLVTFCAFCFIV. Over 493-515 the chain is Cytoplasmic; it reads KYICKALIHHYWSSSKSEKLKKN.

This sequence belongs to the UDP-glycosyltransferase family. Glycosylated.

It is found in the endoplasmic reticulum membrane. The catalysed reaction is kermesate + UDP-alpha-D-glucose = carminate + UDP + 2 H(+). It carries out the reaction flavokermesate + UDP-alpha-D-glucose = flavokermesate 7-C-beta-D-glucoside + UDP + 2 H(+). Its function is as follows. Membrane-bound UDP-glucosyltransferase (UGT) which catalyzes the C-glucosylation of kermesate and flavokermesate to produce carminate and flavokermesate 7-C-beta-D-glucoside (dcll) respectively. Carminate is used as a deterrent against insect predators. This is UDP-glucosyltransferase 2 from Dactylopius coccus (Cochineal).